The primary structure comprises 314 residues: Ribosomal RNA small subunit methyltransferase H (314 aa).

S-adenosyl-L-methionine-binding positions include 36–38, Asp56, Phe80, Asp102, and Gln109; that span reads GGH.

This sequence belongs to the methyltransferase superfamily. RsmH family.

The protein localises to the cytoplasm. It carries out the reaction cytidine(1402) in 16S rRNA + S-adenosyl-L-methionine = N(4)-methylcytidine(1402) in 16S rRNA + S-adenosyl-L-homocysteine + H(+). Specifically methylates the N4 position of cytidine in position 1402 (C1402) of 16S rRNA. In Citrobacter koseri (strain ATCC BAA-895 / CDC 4225-83 / SGSC4696), this protein is Ribosomal RNA small subunit methyltransferase H.